Reading from the N-terminus, the 474-residue chain is PTS system N-acetylmuramic acid-specific EIIBC component (474 aa).

The PTS EIIB type-1 domain maps to 1 to 89 (MAKEISSELL…SELLGEAPVQ (89 aa)). At 1-123 (MAKEISSELL…LAKFATIFTP (123 aa)) the chain is on the cytoplasmic side. Cys-29 (phosphocysteine intermediate; for EIIB activity) is an active-site residue. A PTS EIIC type-1 domain is found at 115 to 474 (AKFATIFTPL…LFGCRNVNLD (360 aa)). A helical membrane pass occupies residues 124–144 (LIPGFIAAGLLLGIATLIATV). The Periplasmic portion of the chain corresponds to 145-157 (MHVPADAQGTLPD). The chain crosses the membrane as a helical span at residues 158–178 (ALNFMKVFSKGLFTFLVILVG). Over 179–180 (YN) the chain is Cytoplasmic. Residues 181-201 (AAQAFGGTGVNGAIIAALFLL) form a helical membrane-spanning segment. Residues 202 to 217 (GYNPAATTGYYAGFHD) are Periplasmic-facing. A helical membrane pass occupies residues 218 to 238 (FFGLPIDPRGNIIGVLIAAWA). The Cytoplasmic portion of the chain corresponds to 239–260 (CARIEGMVRRFMPDDLDMLLTS). The chain crosses the membrane as a helical span at residues 261 to 281 (LITLLITATLAYLIIMPLGGW). The Periplasmic portion of the chain corresponds to 282–301 (LFEGMSWLFMHLNSNPLGCA). The chain crosses the membrane as a helical span at residues 302-322 (VLAGLFLIAVVFGVHQGFIPV). Over 323–334 (YLALMDSQGFNS) the chain is Cytoplasmic. Residues 335–355 (LFPILSMAGAGQVGAALALYW) form a helical membrane-spanning segment. Residues 356–368 (RAQPHSGLRSQVR) lie on the Periplasmic side of the membrane. The helical transmembrane segment at 369–389 (GAIIPGLLGVGEPLIYGVTLP) threads the bilayer. The Cytoplasmic segment spans residues 390–393 (RMKP). A helical transmembrane segment spans residues 394–414 (FITACLGGAAGGLFIGLIAWW). The Periplasmic portion of the chain corresponds to 415–440 (GLPMGLNSAFGPSGLVALPLMTSAQG). A helical membrane pass occupies residues 441-461 (ILPAMAIYAGGILVAWVCGFI). Residues 462 to 474 (FTTLFGCRNVNLD) are Cytoplasmic-facing.

The protein localises to the cell inner membrane. It catalyses the reaction N-acetyl-beta-D-muramate(out) + N(pros)-phospho-L-histidyl-[protein] = N-acetyl-beta-D-muramate 6-phosphate(in) + L-histidyl-[protein]. In terms of biological role, the phosphoenolpyruvate-dependent sugar phosphotransferase system (sugar PTS), a major carbohydrate active transport system, catalyzes the phosphorylation of incoming sugar substrates concomitantly with their translocation across the cell membrane. This system is involved in N-acetylmuramic acid (MurNAc) transport, yielding cytoplasmic MurNAc-6-P. Is also able to take up anhydro-N-acetylmuramic acid (anhMurNAc), but cannot phosphorylate the carbon 6, probably because of the 1,6-anhydro ring. The polypeptide is PTS system N-acetylmuramic acid-specific EIIBC component (murP) (Shigella dysenteriae serotype 1 (strain Sd197)).